We begin with the raw amino-acid sequence, 277 residues long: Shikimate dehydrogenase (NADP(+)) (277 aa).

Residues 18-20 (SKS) and Thr-65 contribute to the shikimate site. Lys-69 functions as the Proton acceptor in the catalytic mechanism. Position 81 (Glu-81) interacts with NADP(+). Shikimate is bound by residues Asn-90 and Asp-106. Residues 130 to 134 (GAGGA), 154 to 159 (NRTFSK), and Met-217 each bind NADP(+). Tyr-219 contributes to the shikimate binding site. Gly-241 serves as a coordination point for NADP(+).

Belongs to the shikimate dehydrogenase family. As to quaternary structure, homodimer.

The enzyme catalyses shikimate + NADP(+) = 3-dehydroshikimate + NADPH + H(+). It functions in the pathway metabolic intermediate biosynthesis; chorismate biosynthesis; chorismate from D-erythrose 4-phosphate and phosphoenolpyruvate: step 4/7. Involved in the biosynthesis of the chorismate, which leads to the biosynthesis of aromatic amino acids. Catalyzes the reversible NADPH linked reduction of 3-dehydroshikimate (DHSA) to yield shikimate (SA). The polypeptide is Shikimate dehydrogenase (NADP(+)) (Vibrio campbellii (strain ATCC BAA-1116)).